We begin with the raw amino-acid sequence, 512 residues long: Glutathione-binding protein GsiB (512 aa).

Positions 1 to 26 (MARAVHRSGLVALGIATALMASCAFA) are cleaved as a signal peptide.

It belongs to the bacterial solute-binding protein 5 family. The complex is composed of two ATP-binding proteins (GsiA), two transmembrane proteins (GsiC and GsiD) and a solute-binding protein (GsiB).

The protein resides in the periplasm. Its function is as follows. Part of the ABC transporter complex GsiABCD involved in glutathione import. Binds glutathione. This chain is Glutathione-binding protein GsiB, found in Escherichia coli O157:H7.